The sequence spans 1078 residues: Exportin-1 (1078 aa).

An Importin N-terminal domain is found at 34–100 (AQQVLTQFQA…RNYIVAVMIK (67 aa)).

The protein belongs to the exportin family. Interacts with php4.

It is found in the nucleus. Functionally, receptor for the leucine-rich nuclear export signal (NES). This chain is Exportin-1 (xpo1), found in Schizosaccharomyces pombe (strain 972 / ATCC 24843) (Fission yeast).